The chain runs to 603 residues: Probable GMP synthase [glutamine-hydrolyzing] (603 aa).

The Glutamine amidotransferase type-1 domain occupies 6–195; sequence KIAVVDFGGQ…FIQICGVSKT (190 aa). The active-site Nucleophile is the C81. Residues H170 and E172 contribute to the active site. A GMPS ATP-PPase domain is found at 196 to 392; the sequence is WGIDQFLKEK…LGLESEWVGR (197 aa). An ATP-binding site is contributed by 224-230; that stretch reads SGGVDST.

As to quaternary structure, homodimer.

The enzyme catalyses XMP + L-glutamine + ATP + H2O = GMP + L-glutamate + AMP + diphosphate + 2 H(+). It participates in purine metabolism; GMP biosynthesis; GMP from XMP (L-Gln route): step 1/1. In terms of biological role, catalyzes the synthesis of GMP from XMP. The protein is Probable GMP synthase [glutamine-hydrolyzing] (guaA) of Leptospira interrogans serogroup Icterohaemorrhagiae serovar copenhageni (strain Fiocruz L1-130).